The primary structure comprises 224 residues: MSERTASQPNTDRSRRRLRVVLDVALSDAAACPLEEIDGEVTAVRHQYTGDDCHADVTVAPACPDDDRSDVMHVATQTTDSCLCCVFSDHGCVPQITAVAADTITVETYLADRTTLTDLVADLKAVANTVSLTHLTRLAADDQSGDSHTHVTLDLFKLTDKQREAAAAAVAKGYYATPRGADLSDLATALGISKSAVSQRLSAVESKLATSAFTEAQQSAGSAP.

In terms of domain architecture, HTH bat-type spans Leu158 to Ala209.

Involved in activating dmsEABCD gene expression related to dimethyl sulfoxide (DMSO) reductase. Required for anaerobic respiration on dimethyl sulfoxide (DMSO) and trimethylamine N-oxide (TMAO). This is Dimethyl sulfoxide reductase transcriptional activator (dmsR) from Halobacterium salinarum (strain ATCC 700922 / JCM 11081 / NRC-1) (Halobacterium halobium).